The sequence spans 367 residues: UDP-N-acetylglucosamine--N-acetylmuramyl-(pentapeptide) pyrophosphoryl-undecaprenol N-acetylglucosamine transferase (367 aa).

Residues Thr15–Gly17, Asn127, Arg163, Ser191, Ile249, and Gln294 each bind UDP-N-acetyl-alpha-D-glucosamine.

Belongs to the glycosyltransferase 28 family. MurG subfamily.

The protein resides in the cell inner membrane. It catalyses the reaction di-trans,octa-cis-undecaprenyl diphospho-N-acetyl-alpha-D-muramoyl-L-alanyl-D-glutamyl-meso-2,6-diaminopimeloyl-D-alanyl-D-alanine + UDP-N-acetyl-alpha-D-glucosamine = di-trans,octa-cis-undecaprenyl diphospho-[N-acetyl-alpha-D-glucosaminyl-(1-&gt;4)]-N-acetyl-alpha-D-muramoyl-L-alanyl-D-glutamyl-meso-2,6-diaminopimeloyl-D-alanyl-D-alanine + UDP + H(+). Its pathway is cell wall biogenesis; peptidoglycan biosynthesis. In terms of biological role, cell wall formation. Catalyzes the transfer of a GlcNAc subunit on undecaprenyl-pyrophosphoryl-MurNAc-pentapeptide (lipid intermediate I) to form undecaprenyl-pyrophosphoryl-MurNAc-(pentapeptide)GlcNAc (lipid intermediate II). This is UDP-N-acetylglucosamine--N-acetylmuramyl-(pentapeptide) pyrophosphoryl-undecaprenol N-acetylglucosamine transferase from Burkholderia cenocepacia (strain ATCC BAA-245 / DSM 16553 / LMG 16656 / NCTC 13227 / J2315 / CF5610) (Burkholderia cepacia (strain J2315)).